A 178-amino-acid polypeptide reads, in one-letter code: MIDDNIENNEQTINDIAEEIVEKANPEITELKAEIEELKDRLIRTTAEIDNTRKRLEKARDEAKDYAIATFAKELLNVSDNLSRALAHKPANSDIEVTNIIAGVQMTKDELDKIFHRHHIEEIKPEIGSMFDYNLHNAISQIEHPDHEPNSIITLMQSGYKIRDRLLRPATVQVAKKS.

This sequence belongs to the GrpE family. As to quaternary structure, homodimer.

Its subcellular location is the cytoplasm. Functionally, participates actively in the response to hyperosmotic and heat shock by preventing the aggregation of stress-denatured proteins, in association with DnaK and GrpE. It is the nucleotide exchange factor for DnaK and may function as a thermosensor. Unfolded proteins bind initially to DnaJ; upon interaction with the DnaJ-bound protein, DnaK hydrolyzes its bound ATP, resulting in the formation of a stable complex. GrpE releases ADP from DnaK; ATP binding to DnaK triggers the release of the substrate protein, thus completing the reaction cycle. Several rounds of ATP-dependent interactions between DnaJ, DnaK and GrpE are required for fully efficient folding. The chain is Protein GrpE from Rickettsia akari (strain Hartford).